The sequence spans 444 residues: Enolase (444 aa).

Positions 163 and 172 each coordinate substrate. Catalysis depends on E215, which acts as the Proton donor. D250, E300, and D327 together coordinate Mg(2+). Substrate-binding residues include E300 and D327. K352 acts as the Proton acceptor in catalysis. Substrate is bound by residues 379 to 382 (SHRS) and K403.

This sequence belongs to the enolase family. Homodimer. Mg(2+) is required as a cofactor.

It is found in the cytoplasm. It catalyses the reaction (2R)-2-phosphoglycerate = phosphoenolpyruvate + H2O. It participates in carbohydrate degradation; glycolysis; pyruvate from D-glyceraldehyde 3-phosphate: step 4/5. This Mesembryanthemum crystallinum (Common ice plant) protein is Enolase (PGH1).